A 729-amino-acid polypeptide reads, in one-letter code: Bromo and FHA domain-containing protein DDB_G0267958 (729 aa).

The segment covering 46-79 (LPIPNTSNTNPPMNQSSSPTTTTTTPTTTTTPTT) has biased composition (low complexity). A disordered region spans residues 46 to 83 (LPIPNTSNTNPPMNQSSSPTTTTTTPTTTTTPTTAEPA). The region spanning 112-167 (LIIGSDTELADIQVVRPGIYPKHVEIIYDKEKKKFYLNPLIDPKDSDNVRLNFVPF) is the FHA domain. Low complexity-rich tracts occupy residues 208 to 221 (IPSNTPTCITNTPI), 229 to 275 (PPSS…ATKT), and 283 to 306 (PTKTTTTTTVTTSKPTVKPTAVKK). Disordered regions lie at residues 208-361 (IPSN…MSCK) and 403-442 (SRRPTAPVTPTKPTSTKKVTTPKKATVVKPPKESKVPKVP). Residues 310-341 (DDDYGDDYNEEEDDDDEEEEEEEEEEEEEEEV) show a composition bias toward acidic residues. A coiled-coil region spans residues 315 to 352 (DDYNEEEDDDDEEEEEEEEEEEEEEEVESKQIKVVNSK). Residues 406–431 (PTAPVTPTKPTSTKKVTTPKKATVVK) show a composition bias toward low complexity. The 120-residue stretch at 498–617 (SNEKKEILKC…IELYKALSNS (120 aa)) folds into the Bromo domain. The stretch at 659–718 (SKNKEQTVPQEEDEEEEEEEEEEEEEEEEGEEGKEDEEEEEKEEEEGEENEEEEDVEIDD) forms a coiled coil. The interval 659–729 (SKNKEQTVPQ…EIDQESDDDQ (71 aa)) is disordered. Over residues 668 to 729 (QEEDEEEEEE…EIDQESDDDQ (62 aa)) the composition is skewed to acidic residues.

This chain is Bromo and FHA domain-containing protein DDB_G0267958, found in Dictyostelium discoideum (Social amoeba).